The following is a 135-amino-acid chain: Large ribosomal subunit protein uL22c (135 aa).

This sequence belongs to the universal ribosomal protein uL22 family. As to quaternary structure, part of the 50S ribosomal subunit.

The protein localises to the plastid. Functionally, this protein binds specifically to 23S rRNA. Its function is as follows. The globular domain of the protein is located near the polypeptide exit tunnel on the outside of the subunit, while an extended beta-hairpin is found that lines the wall of the exit tunnel in the center of the 70S ribosome. The polypeptide is Large ribosomal subunit protein uL22c (rpl22) (Cuscuta reflexa (Southern Asian dodder)).